Consider the following 255-residue polypeptide: Accessory gland-specific peptide 26Aa (255 aa).

A signal peptide spans 1-18 (MNLILLCSQILLLLFTVA). Residues 86-110 (PINNSKSRKNSSTLPSQILTDKPNQ) form a disordered region. Positions 87 to 110 (INNSKSRKNSSTLPSQILTDKPNQ) are enriched in polar residues. Residues Asn-88, Asn-95, and Asn-136 are each glycosylated (N-linked (GlcNAc...) asparagine). Disordered regions lie at residues 177–196 (NAQN…SKDI) and 235–255 (NNPA…PSTT). The segment covering 183–192 (KSTKSCKKRP) has biased composition (basic residues). Over residues 245-255 (KSPSEGNPSTT) the composition is skewed to polar residues.

In terms of processing, it undergoes several cleavages as it is secreted and it is further processed in the recipient female. Main cells of the accessory glands of males.

The protein localises to the secreted. It localises to the extracellular space. Its function is as follows. This protein is transferred from male to female's hemolymph during mating, affecting egglaying and behavior after mating. The chain is Accessory gland-specific peptide 26Aa (Acp26Aa) from Drosophila sechellia (Fruit fly).